The chain runs to 222 residues: 26S proteasome non-ATPase regulatory subunit 9 (222 aa).

The region spanning 108–194 (QARDMAEARE…KPLNVMVIRR (87 aa)) is the PDZ domain. S128 is modified (phosphoserine).

Belongs to the proteasome subunit p27 family. In terms of assembly, interacts with PSMC3. Part of a transient complex (modulator) containing PSMD9, PSMC6 and PSMC3 formed during the assembly of the 26S proteasome.

Its function is as follows. Acts as a chaperone during the assembly of the 26S proteasome, specifically of the base subcomplex of the PA700/19S regulatory complex (RC). During the base subcomplex assembly is part of an intermediate PSMD9:PSMC6:PSMC3 module, also known as modulator trimer complex; PSMD9 is released during the further base assembly process. This Rattus norvegicus (Rat) protein is 26S proteasome non-ATPase regulatory subunit 9 (Psmd9).